The chain runs to 372 residues: Adaptive-response sensory kinase SasA (372 aa).

The 214-residue stretch at 147-360 folds into the Histidine kinase domain; sequence MVAHELRTPL…CFHFTVPVWQ (214 aa). The residue at position 150 (H150) is a Phosphohistidine; by autocatalysis.

In terms of assembly, homooligomerizes. Interacts with KaiC. Participates in the KaiBC complex, whose core is composed of a KaiC homohexamer and 6 KaiB.

The catalysed reaction is ATP + protein L-histidine = ADP + protein N-phospho-L-histidine.. Its function is as follows. Member of the two-component regulatory system SasA/RpaA involved in genome-wide circadian gene expression. One of several clock output pathways. Participates in the Kai clock protein complex, the main circadian regulator in cyanobacteria, via its interaction with KaiC. KaiC enhances the autophosphorylation activity of SasA, which then transfers its phosphate group to RpaA to activate it. In addition to its output function, recruits fold-shifted KaiB (KaiB(fs)) to KaiC to cooperatively form the KaiB(6):KaiC(6) complex (independent of SasA kinase activity). Required for robustness of the circadian rhythm of gene expression and is involved in clock output, also required for adaptation to light/dark cycles. In Prochlorococcus marinus (strain MIT 9301), this protein is Adaptive-response sensory kinase SasA.